The chain runs to 347 residues: Homocysteine S-methyltransferase 3 (347 aa).

Residues leucine 12–leucine 333 form the Hcy-binding domain. Residues cysteine 251, cysteine 318, and cysteine 319 each coordinate Zn(2+).

In terms of assembly, monomer. Zn(2+) serves as cofactor. Expressed predominantly in rosette leaves. Expressed in roots, cauline leaves and developing seeds.

It carries out the reaction S-methyl-L-methionine + L-homocysteine = 2 L-methionine + H(+). Functionally, catalyzes methyl transfer from S-methylmethionine (SMM) to adenosyl-L-homocysteine (AdoMet). SMM degradation (by HMT-1, HMT-2 and HMT-3) and biosynthesis (by MMT1) constitute the SMM cycle in plants, which is probably required to achieve short term control of AdoMet level. The protein is Homocysteine S-methyltransferase 3 (HMT3) of Arabidopsis thaliana (Mouse-ear cress).